The chain runs to 206 residues: N-(5'-phosphoribosyl)anthranilate isomerase (206 aa).

This sequence belongs to the TrpF family.

The catalysed reaction is N-(5-phospho-beta-D-ribosyl)anthranilate = 1-(2-carboxyphenylamino)-1-deoxy-D-ribulose 5-phosphate. Its pathway is amino-acid biosynthesis; L-tryptophan biosynthesis; L-tryptophan from chorismate: step 3/5. In Rubrobacter xylanophilus (strain DSM 9941 / JCM 11954 / NBRC 16129 / PRD-1), this protein is N-(5'-phosphoribosyl)anthranilate isomerase.